The primary structure comprises 744 residues: NAD(P)H-quinone oxidoreductase subunit 5, chloroplastic (744 aa).

Transmembrane regions (helical) follow at residues 9 to 29 (WIIP…LLLF), 40 to 60 (WAFQ…NLSI), 89 to 109 (IDPL…MVLI), 125 to 145 (FAYM…SNLI), 147 to 167 (IYIF…FWFT), 185 to 205 (GDFG…SFEF), 219 to 239 (NEVN…GAIA), 258 to 278 (TPIS…FLVA), 290 to 312 (IMNF…ALAQ), 327 to 347 (LGYM…FHLI), 354 to 374 (ALLF…VGYC), 396 to 416 (TSFL…CFWS), 425 to 445 (WLYS…TAFY), 549 to 569 (LFPI…GIPF), 608 to 628 (VFSV…YKPV), and 724 to 744 (YLFF…FLNF).

The protein belongs to the complex I subunit 5 family. NDH is composed of at least 16 different subunits, 5 of which are encoded in the nucleus.

Its subcellular location is the plastid. The protein localises to the chloroplast thylakoid membrane. It catalyses the reaction a plastoquinone + NADH + (n+1) H(+)(in) = a plastoquinol + NAD(+) + n H(+)(out). It carries out the reaction a plastoquinone + NADPH + (n+1) H(+)(in) = a plastoquinol + NADP(+) + n H(+)(out). Functionally, NDH shuttles electrons from NAD(P)H:plastoquinone, via FMN and iron-sulfur (Fe-S) centers, to quinones in the photosynthetic chain and possibly in a chloroplast respiratory chain. The immediate electron acceptor for the enzyme in this species is believed to be plastoquinone. Couples the redox reaction to proton translocation, and thus conserves the redox energy in a proton gradient. This chain is NAD(P)H-quinone oxidoreductase subunit 5, chloroplastic (ndhF), found in Adenocaulon himalaicum (Trailplant).